The chain runs to 95 residues: Integration host factor subunit beta (95 aa).

This sequence belongs to the bacterial histone-like protein family. In terms of assembly, heterodimer of an alpha and a beta chain.

Functionally, this protein is one of the two subunits of integration host factor, a specific DNA-binding protein that functions in genetic recombination as well as in transcriptional and translational control. This chain is Integration host factor subunit beta, found in Paracoccus denitrificans (strain Pd 1222).